Consider the following 149-residue polypeptide: Transcriptional repressor NrdR (149 aa).

A zinc finger lies at 3-34 (CPFCSATDTKVIDSRLVADGHQVRRRRECVQC). Residues 49 to 139 (PRVVKQDGSR…VYRAFEDVSE (91 aa)) form the ATP-cone domain.

It belongs to the NrdR family. The cofactor is Zn(2+).

Its function is as follows. Negatively regulates transcription of bacterial ribonucleotide reductase nrd genes and operons by binding to NrdR-boxes. The sequence is that of Transcriptional repressor NrdR from Shewanella pealeana (strain ATCC 700345 / ANG-SQ1).